Here is a 301-residue protein sequence, read N- to C-terminus: uncharacterized protein (301 aa).

Disordered regions lie at residues 167 to 186 (DVHLNSTTPPHTAQVSPKER) and 225 to 244 (ASESSLETSSVSSPQPEGAS). Residues 170–181 (LNSTTPPHTAQV) show a composition bias toward polar residues. The span at 226-237 (SESSLETSSVSS) shows a compositional bias: low complexity.

This is an uncharacterized protein from Mus musculus (Mouse).